The chain runs to 123 residues: Small ribosomal subunit protein uS12 (123 aa).

The segment at 1 to 29 (MPTINQLIRKKRQSSASRKKSPALQKCPQ) is disordered. Positions 8-21 (IRKKRQSSASRKKS) are enriched in basic residues. Asp-89 carries the 3-methylthioaspartic acid modification.

It belongs to the universal ribosomal protein uS12 family. Part of the 30S ribosomal subunit. Contacts proteins S8 and S17. May interact with IF1 in the 30S initiation complex.

With S4 and S5 plays an important role in translational accuracy. In terms of biological role, interacts with and stabilizes bases of the 16S rRNA that are involved in tRNA selection in the A site and with the mRNA backbone. Located at the interface of the 30S and 50S subunits, it traverses the body of the 30S subunit contacting proteins on the other side and probably holding the rRNA structure together. The combined cluster of proteins S8, S12 and S17 appears to hold together the shoulder and platform of the 30S subunit. The protein is Small ribosomal subunit protein uS12 of Chlamydia abortus (strain DSM 27085 / S26/3) (Chlamydophila abortus).